Here is a 296-residue protein sequence, read N- to C-terminus: Ribosomal RNA small subunit methyltransferase A (296 aa).

Positions 1–11 are enriched in basic and acidic residues; it reads MERSHVGRDCG. A disordered region spans residues 1–24; sequence MERSHVGRDCGSRSSPRAFSVPTS. Residues 12–24 are compositionally biased toward polar residues; the sequence is SRSSPRAFSVPTS. S-adenosyl-L-methionine contacts are provided by Asn43, Leu45, Gly70, Glu91, Asp113, and Asn135.

The protein belongs to the class I-like SAM-binding methyltransferase superfamily. rRNA adenine N(6)-methyltransferase family. RsmA subfamily.

The protein localises to the cytoplasm. The catalysed reaction is adenosine(1518)/adenosine(1519) in 16S rRNA + 4 S-adenosyl-L-methionine = N(6)-dimethyladenosine(1518)/N(6)-dimethyladenosine(1519) in 16S rRNA + 4 S-adenosyl-L-homocysteine + 4 H(+). Its function is as follows. Specifically dimethylates two adjacent adenosines (A1518 and A1519) in the loop of a conserved hairpin near the 3'-end of 16S rRNA in the 30S particle. May play a critical role in biogenesis of 30S subunits. The polypeptide is Ribosomal RNA small subunit methyltransferase A (Salinibacter ruber (strain DSM 13855 / M31)).